Here is a 199-residue protein sequence, read N- to C-terminus: Large ribosomal subunit protein bL25 (199 aa).

This sequence belongs to the bacterial ribosomal protein bL25 family. CTC subfamily. In terms of assembly, part of the 50S ribosomal subunit; part of the 5S rRNA/L5/L18/L25 subcomplex. Contacts the 5S rRNA. Binds to the 5S rRNA independently of L5 and L18.

In terms of biological role, this is one of the proteins that binds to the 5S RNA in the ribosome where it forms part of the central protuberance. This chain is Large ribosomal subunit protein bL25, found in Chloroherpeton thalassium (strain ATCC 35110 / GB-78).